Consider the following 189-residue polypeptide: Peptidyl-tRNA hydrolase (189 aa).

Position 15 (Y15) interacts with tRNA. H20 acts as the Proton acceptor in catalysis. Residues Y64, N66, and N112 each contribute to the tRNA site.

This sequence belongs to the PTH family. In terms of assembly, monomer.

Its subcellular location is the cytoplasm. It carries out the reaction an N-acyl-L-alpha-aminoacyl-tRNA + H2O = an N-acyl-L-amino acid + a tRNA + H(+). Functionally, hydrolyzes ribosome-free peptidyl-tRNAs (with 1 or more amino acids incorporated), which drop off the ribosome during protein synthesis, or as a result of ribosome stalling. Its function is as follows. Catalyzes the release of premature peptidyl moieties from peptidyl-tRNA molecules trapped in stalled 50S ribosomal subunits, and thus maintains levels of free tRNAs and 50S ribosomes. The polypeptide is Peptidyl-tRNA hydrolase (Sulfurihydrogenibium sp. (strain YO3AOP1)).